Consider the following 76-residue polypeptide: Exodeoxyribonuclease 7 small subunit (76 aa).

Belongs to the XseB family. As to quaternary structure, heterooligomer composed of large and small subunits.

Its subcellular location is the cytoplasm. The catalysed reaction is Exonucleolytic cleavage in either 5'- to 3'- or 3'- to 5'-direction to yield nucleoside 5'-phosphates.. In terms of biological role, bidirectionally degrades single-stranded DNA into large acid-insoluble oligonucleotides, which are then degraded further into small acid-soluble oligonucleotides. This chain is Exodeoxyribonuclease 7 small subunit, found in Bacillus cereus (strain ATCC 14579 / DSM 31 / CCUG 7414 / JCM 2152 / NBRC 15305 / NCIMB 9373 / NCTC 2599 / NRRL B-3711).